The following is a 484-amino-acid chain: 60S ribosome subunit biogenesis protein NOP8 (484 aa).

The RRM domain occupies 7–83 (KRIFVGNIFH…NILKVDEAKP (77 aa)). 3 positions are modified to phosphoserine: S234, S239, and S268. Residues 260–330 (DKPMTLNDSD…EGDGQEDNEF (71 aa)) are disordered. A compositionally biased stretch (acidic residues) spans 320–329 (DEGDGQEDNE). Position 370 is a phosphoserine (S370).

As to quaternary structure, interacts with NIP7 and RRP43. Together with DBP6, URB1, URB2 and RSA3, forms an RNA-independent complex, which is required during early maturation of nascent 60S ribosomal subunits.

The protein resides in the nucleus. Its subcellular location is the nucleolus. In terms of biological role, required for 60S ribosomal subunit synthesis. May be involved in assembly reactions occurring within late pre-ribosomal particles. This Saccharomyces cerevisiae (strain ATCC 204508 / S288c) (Baker's yeast) protein is 60S ribosome subunit biogenesis protein NOP8 (NOP8).